A 467-amino-acid polypeptide reads, in one-letter code: ATP synthase subunit beta (467 aa).

156 to 163 (GGAGVGKT) lines the ATP pocket.

It belongs to the ATPase alpha/beta chains family. As to quaternary structure, F-type ATPases have 2 components, CF(1) - the catalytic core - and CF(0) - the membrane proton channel. CF(1) has five subunits: alpha(3), beta(3), gamma(1), delta(1), epsilon(1). CF(0) has three main subunits: a(1), b(2) and c(9-12). The alpha and beta chains form an alternating ring which encloses part of the gamma chain. CF(1) is attached to CF(0) by a central stalk formed by the gamma and epsilon chains, while a peripheral stalk is formed by the delta and b chains.

It is found in the cell inner membrane. The catalysed reaction is ATP + H2O + 4 H(+)(in) = ADP + phosphate + 5 H(+)(out). In terms of biological role, produces ATP from ADP in the presence of a proton gradient across the membrane. The catalytic sites are hosted primarily by the beta subunits. The protein is ATP synthase subunit beta of Ralstonia nicotianae (strain ATCC BAA-1114 / GMI1000) (Ralstonia solanacearum).